We begin with the raw amino-acid sequence, 422 residues long: Glucose-1-phosphate adenylyltransferase (422 aa).

Residues Tyr108, Gly173, 188–189 (EK), and Ser206 contribute to the alpha-D-glucose 1-phosphate site.

It belongs to the bacterial/plant glucose-1-phosphate adenylyltransferase family. In terms of assembly, homotetramer.

It catalyses the reaction alpha-D-glucose 1-phosphate + ATP + H(+) = ADP-alpha-D-glucose + diphosphate. The protein operates within glycan biosynthesis; glycogen biosynthesis. In terms of biological role, involved in the biosynthesis of ADP-glucose, a building block required for the elongation reactions to produce glycogen. Catalyzes the reaction between ATP and alpha-D-glucose 1-phosphate (G1P) to produce pyrophosphate and ADP-Glc. The sequence is that of Glucose-1-phosphate adenylyltransferase from Paraburkholderia phymatum (strain DSM 17167 / CIP 108236 / LMG 21445 / STM815) (Burkholderia phymatum).